The primary structure comprises 307 residues: Putative ankyrin repeat protein R229 (307 aa).

ANK repeat units follow at residues alanine 135 to valine 164, aspartate 165 to alanine 194, aspartate 196 to alanine 224, asparagine 226 to alanine 254, arginine 256 to tyrosine 284, and serine 286 to aspartate 307.

This chain is Putative ankyrin repeat protein R229, found in Acanthamoeba polyphaga (Amoeba).